A 270-amino-acid chain; its full sequence is Putative pyruvate, phosphate dikinase regulatory protein (270 aa).

An ADP-binding site is contributed by 151–158 (GVSRTSKT).

This sequence belongs to the pyruvate, phosphate/water dikinase regulatory protein family. PDRP subfamily.

It carries out the reaction N(tele)-phospho-L-histidyl/L-threonyl-[pyruvate, phosphate dikinase] + ADP = N(tele)-phospho-L-histidyl/O-phospho-L-threonyl-[pyruvate, phosphate dikinase] + AMP + H(+). The enzyme catalyses N(tele)-phospho-L-histidyl/O-phospho-L-threonyl-[pyruvate, phosphate dikinase] + phosphate + H(+) = N(tele)-phospho-L-histidyl/L-threonyl-[pyruvate, phosphate dikinase] + diphosphate. Bifunctional serine/threonine kinase and phosphorylase involved in the regulation of the pyruvate, phosphate dikinase (PPDK) by catalyzing its phosphorylation/dephosphorylation. The chain is Putative pyruvate, phosphate dikinase regulatory protein (yqfL) from Bacillus subtilis (strain 168).